A 251-amino-acid chain; its full sequence is Ribosomal RNA small subunit methyltransferase G (251 aa).

S-adenosyl-L-methionine-binding positions include Gly74, Phe79, 125-126 (AE), and Arg144. Positions 224–251 (RPAGLPTQHPLGAIEGAPRVESEEPEEP) are disordered.

The protein belongs to the methyltransferase superfamily. RNA methyltransferase RsmG family.

It localises to the cytoplasm. Specifically methylates the N7 position of a guanine in 16S rRNA. This is Ribosomal RNA small subunit methyltransferase G from Gloeobacter violaceus (strain ATCC 29082 / PCC 7421).